Reading from the N-terminus, the 215-residue chain is Uracil phosphoribosyltransferase (215 aa).

5-phospho-alpha-D-ribose 1-diphosphate contacts are provided by residues Arg77, Arg102, and 129–137 (DPMLATGGS). Residues Ile193 and 198 to 200 (GDA) each bind uracil. Residue Asp199 coordinates 5-phospho-alpha-D-ribose 1-diphosphate.

The protein belongs to the UPRTase family. It depends on Mg(2+) as a cofactor.

The enzyme catalyses UMP + diphosphate = 5-phospho-alpha-D-ribose 1-diphosphate + uracil. Its pathway is pyrimidine metabolism; UMP biosynthesis via salvage pathway; UMP from uracil: step 1/1. With respect to regulation, allosterically activated by GTP. Catalyzes the conversion of uracil and 5-phospho-alpha-D-ribose 1-diphosphate (PRPP) to UMP and diphosphate. This chain is Uracil phosphoribosyltransferase, found in Corynebacterium urealyticum (strain ATCC 43042 / DSM 7109).